A 293-amino-acid polypeptide reads, in one-letter code: Ribosomal RNA small subunit methyltransferase A (293 aa).

Positions 38, 40, 65, 86, 116, and 135 each coordinate S-adenosyl-L-methionine.

It belongs to the class I-like SAM-binding methyltransferase superfamily. rRNA adenine N(6)-methyltransferase family. RsmA subfamily.

The protein resides in the cytoplasm. It carries out the reaction adenosine(1518)/adenosine(1519) in 16S rRNA + 4 S-adenosyl-L-methionine = N(6)-dimethyladenosine(1518)/N(6)-dimethyladenosine(1519) in 16S rRNA + 4 S-adenosyl-L-homocysteine + 4 H(+). In terms of biological role, specifically dimethylates two adjacent adenosines (A1518 and A1519) in the loop of a conserved hairpin near the 3'-end of 16S rRNA in the 30S particle. May play a critical role in biogenesis of 30S subunits. In Nocardia farcinica (strain IFM 10152), this protein is Ribosomal RNA small subunit methyltransferase A.